A 346-amino-acid polypeptide reads, in one-letter code: Serine/threonine-protein phosphatase PP1(4.8) (346 aa).

A disordered region spans residues 46–65 (QSAQTQESTPKTNGTGRATT). Asp-102, His-104, Asp-130, and Asn-162 together coordinate Mn(2+). The active-site Proton donor is the His-163. 2 residues coordinate Mn(2+): His-211 and His-287.

This sequence belongs to the PPP phosphatase family. PP-1 subfamily. The cofactor is Mn(2+).

The catalysed reaction is O-phospho-L-seryl-[protein] + H2O = L-seryl-[protein] + phosphate. The enzyme catalyses O-phospho-L-threonyl-[protein] + H2O = L-threonyl-[protein] + phosphate. The protein is Serine/threonine-protein phosphatase PP1(4.8) of Trypanosoma brucei brucei.